The sequence spans 302 residues: Protein KTI12 homolog (302 aa).

Residue 8 to 15 (GQPCSGKS) participates in ATP binding. The calmodulin-binding stretch occupies residues 260 to 273 (LRRTFVKLMGQSSL).

The protein belongs to the KTI12 family. As to quaternary structure, interacts with the elongator complex. Binds to calmodulin in a calcium-dependent manner. As to expression, expressed in roots, hypocotyls, cotyledons, shoot apices, stems, inflorescence apices, leaves and flowers.

The protein resides in the cytoplasm. It localises to the nucleus. Its function is as follows. Elongator complex-associated factor that is not a structural subunit but rather transiently contacts the complex. Regulates both meristem activity and organ growth; acts as a positive regulator of adaxial leaf patterning by modulating both cell division and differentiation. Required for an early step in synthesis of 5-carbamoylmethyl (ncm5) groups present on uridines (ncm5U) at the wobble position in tRNA. The protein is Protein KTI12 homolog of Arabidopsis thaliana (Mouse-ear cress).